Consider the following 880-residue polypeptide: Interference hedgehog (880 aa).

The signal sequence occupies residues 1–20 (MTLLTSSLLFFSLLTSRLEA). Over 21-703 (IPVLEKSPAH…ETFNMSPMLT (683 aa)) the chain is Extracellular. 4 Ig-like C2-type domains span residues 45–142 (PGVR…IARL), 132–234 (PLVV…IQLT), 252–340 (PHLL…YIKV), and 346–432 (PQIV…LQVN). 4 disulfide bridges follow: C68–C126, C173–C220, C276–C324, and C367–C414. N-linked (GlcNAc...) asparagine glycans are attached at residues N102 and N209. Residues 426 to 467 (GTLLQVNPKQIQEPRESGGTHRPKPNQGSKQKQMYPPTPPNV) are disordered. Fibronectin type-III domains lie at 461–567 (PPTP…LQPG) and 575–670 (VPEL…TQRP). An N-linked (GlcNAc...) asparagine glycan is attached at N466. Positions 497, 501, 503, and 541 each coordinate heparin. An N-linked (GlcNAc...) asparagine glycan is attached at N557. The tract at residues 662–697 (LKQGRTQRPKTSTTEEPTLQMGDRDTTTPSHNETFN) is disordered. Composition is skewed to polar residues over residues 665–678 (GRTQRPKTSTTEEP) and 688–697 (TTPSHNETFN). The N-linked (GlcNAc...) asparagine glycan is linked to N693. Residues 704–724 (GTIGGGAVLILLLISTCLCVC) traverse the membrane as a helical segment. Topologically, residues 725–880 (RRRSSRSRGN…SSGSLNSVGV (156 aa)) are cytoplasmic. Disordered stretches follow at residues 728–762 (SSRSRGNNPNKPRMAELRDDFVPLGNCSPTKQRQR) and 775–880 (QQQQ…SVGV). 2 stretches are compositionally biased toward low complexity: residues 823 to 837 (RAGGSNGSNNGNNNN) and 864 to 880 (SSRSENLSSGSLNSVGV).

The protein belongs to the immunoglobulin superfamily. IHOG family. Homodimer. Heterotetramer; 2 iHog chains bind 2 hh chains when facilitated by heparin, heparin is required to promote high-affinity interactions between hh and iHog.

The protein localises to the membrane. Functionally, mediates response to the active Hedgehog (Hh) protein signal in embryos, functioning upstream or at the level of patched (ptc). This is Interference hedgehog from Drosophila yakuba (Fruit fly).